Here is a 430-residue protein sequence, read N- to C-terminus: Trigger factor (430 aa).

One can recognise a PPIase FKBP-type domain in the interval 163-248; it reads GNIAIIDFKG…IKDIKVKELP (86 aa).

This sequence belongs to the FKBP-type PPIase family. Tig subfamily.

The protein localises to the cytoplasm. The enzyme catalyses [protein]-peptidylproline (omega=180) = [protein]-peptidylproline (omega=0). In terms of biological role, involved in protein export. Acts as a chaperone by maintaining the newly synthesized protein in an open conformation. Functions as a peptidyl-prolyl cis-trans isomerase. The protein is Trigger factor of Clostridium botulinum (strain ATCC 19397 / Type A).